We begin with the raw amino-acid sequence, 92 residues long: Transcription factor PRE5 (92 aa).

One can recognise a bHLH domain in the interval Arg4–Leu59.

Belongs to the bHLH protein family. Interacts with IBH1.

It localises to the nucleus. Its function is as follows. Atypical and probable non DNA-binding bHLH transcription factor that integrates multiple signaling pathways to regulate cell elongation and plant development. May have a regulatory role in various aspects of gibberellin-dependent growth and development. This is Transcription factor PRE5 (PRE5) from Arabidopsis thaliana (Mouse-ear cress).